Here is a 7096-residue protein sequence, read N- to C-terminus: Replicase polyprotein 1ab (7096 aa).

The tract at residues 1-147 is disordered; it reads MESLVPGFNE…ADLKSFDLGD (147 aa). Residues 1–2225 lie on the Cytoplasmic side of the membrane; it reads MESLVPGFNE…NYLKSPNFSK (2225 aa). One can recognise a CoV Nsp1 globular domain in the interval 12–127; sequence THVQLSLPVL…YRKVLLRKNG (116 aa). In terms of domain architecture, BetaCoV Nsp1 C-terminal spans 148–179; it reads ELGTDPYEDFQENWNTKHSSGVTRELMRELNG. The tract at residues 154 to 180 is binding to 40s ribosome mRNA entry channel; it reads YEDFQENWNTKHSSGVTRELMRELNGG. The CoV Nsp2 N-terminal domain occupies 183–456; sequence TRYVDNNFCG…NDNLLEILQK (274 aa). 12 residues coordinate Zn(2+): C200, C231, H234, H236, C323, C326, C341, C344, C370, C373, H382, and C416. The interval 200–236 is C2H2; the sequence is CIKDLLARAGKASCTLSEQLDFIDTKRGVYCCREHEH. A C4 region spans residues 323–344; the sequence is CDHCGETSWQTGDFVKATCEFC. The tract at residues 370–416 is C2HC; the sequence is CPACHNSEVGPEHSLAEYHNESGLKTILRKGGRTIAFGGCVFSYVGC. In terms of domain architecture, CoV Nsp2 middle spans 458–688; sequence KVNINIVGDF…FKLVNKFLAL (231 aa). LRR repeat units follow at residues 545 to 569 and 697 to 719; these read RSIF…AITI and GAKL…LYRK. The CoV Nsp2 C-terminal domain maps to 690-818; that stretch reads ADSIIIGGAK…TNNTFTLKGG (129 aa). One can recognise a Ubiquitin-like 1 domain in the interval 821–929; it reads TKVTFGDDTV…MYCSFYPPDE (109 aa). The disordered stretch occupies residues 926-999; that stretch reads PPDEDEEEGD…QQDGSEDNQT (74 aa). Acidic residues-rich tracts occupy residues 927 to 942 and 971 to 984; these read PDED…EEFE and PEEE…DDDS. Macro domains follow at residues 1025–1194, 1231–1359, and 1367–1494; these read VNSF…LEMK, KIKA…LPSI, and ILGT…TSSS. Residues 1496 to 1561 enclose the DPUP domain; the sequence is TPEEHFIETI…TFDNLKTLLS (66 aa). A Ubiquitin-like 2 domain is found at 1565–1620; that stretch reads VRTIKVFTTVDNINLHTQVVDMSMTYGQQFGPTYLDGADVTKIKPHNSHEGKTFYV. A Peptidase C16 domain is found at 1634 to 1898; it reads YYHTTDPSFL…CTEIDPKLDN (265 aa). The active-site For PL-PRO activity is C1674. An LRR 3 repeat occupies 1680–1702; that stretch reads LLTLQQIELKFNPPALQDAYYRA. Residues C1752, C1755, C1787, and C1789 each coordinate Zn(2+). A C4-type zinc finger spans residues 1752–1789; the sequence is CKTCGQQQTTLKGVEAVMYMGTLSYEQFKKGVQIPCTC. Catalysis depends on for PL-PRO activity residues H1835 and D1849. In terms of domain architecture, Nucleic acid-binding spans 1911-2021; that stretch reads PIDLVPNQPY…CLWSTKPVET (111 aa). The G2M domain maps to 2046-2155; sequence PVSEEVVENP…LNKVVSTTTN (110 aa). Residues 2226–2246 traverse the membrane as a helical segment; sequence LINIIIWFLLLSVCLGSLIYS. At 2247 to 2317 the chain is on the lumenal side; it reads TAALGVLMSN…QITISSFKWD (71 aa). Positions 2247 to 2317 constitute a 3Ecto domain; sequence TAALGVLMSN…QITISSFKWD (71 aa). 2 cysteine pairs are disulfide-bonded: C2263–C2291 and C2282–C2288. Residues 2318-2338 traverse the membrane as a helical segment; the sequence is LTAFGLVAEWFLAYILFTRFF. Residues 2339-2775 lie on the Cytoplasmic side of the membrane; it reads YVLGLAAIMQ…VNNWLKQLIK (437 aa). The segment at 2395-2485 is Y1; sequence KSYVHVVDGC…QFKRPINPTD (91 aa). In terms of domain architecture, CoV Nsp3 Y spans 2395–2763; it reads KSYVHVVDGC…VTTKIALKGG (369 aa). Zn(2+) contacts are provided by H2399, C2404, C2409, C2412, C2445, H2448, C2452, and C2455. The ZF1 stretch occupies residues 2399–2412; that stretch reads HVVDGCNSSTCMMC. The interval 2445 to 2455 is ZF2; the sequence is CKLHNWNCVNC. The Y2 stretch occupies residues 2486–2580; it reads QSSYIVDSVT…LLDQALVSDV (95 aa). A coV-Y region spans residues 2486 to 2763; that stretch reads QSSYIVDSVT…VTTKIALKGG (278 aa). The segment at 2581-2662 is Y3; that stretch reads GDSAEVAVKM…ECLKLSHQSD (82 aa). Residues 2663–2763 form a Y4 region; the sequence is IEVTGDSCNN…VTTKIALKGG (101 aa). Residues 2776-2796 traverse the membrane as a helical segment; that stretch reads VTLVFLFVAAIFYLITPVHVM. At 2797 to 3044 the chain is on the lumenal side; it reads SKHTDFSSEI…IQPIGALDIS (248 aa). The helical transmembrane segment at 3045-3065 threads the bilayer; sequence ASIVAGGIVAIVVTCLAYYFM. Topologically, residues 3066–3099 are cytoplasmic; sequence RFRRAFGEYSHVVAFNTLLFLMSFTVLCLTPVYS. The helical transmembrane segment at 3100–3120 threads the bilayer; that stretch reads FLPGVYSVIYLYLTFYLTNDV. Over 3121–3127 the chain is Lumenal; it reads SFLAHIQ. A helical transmembrane segment spans residues 3128–3148; the sequence is WMVMFTPLVPFWITIAYIICI. Residues 3149–3586 are Cytoplasmic-facing; that stretch reads STKHFYWFFS…KGTHHWLLLT (438 aa). A Nsp4C domain is found at 3165–3263; that stretch reads VVFNGVSFST…QTSITSAVLQ (99 aa). Residues 3185–3206 form an LRR 4 repeat; the sequence is LNKEMYLKLRSDVLLPLTQYNR. Residues 3264–3569 form the Peptidase C30 domain; that stretch reads SGFRKMAFPS…VRQCSGVTFQ (306 aa). A Glycyl lysine isopeptide (Lys-Gly) (interchain with G-Cter in ubiquitin) cross-link involves residue K3268. H3304 functions as the For 3CL-PRO activity in the catalytic mechanism. K3353 participates in a covalent cross-link: Glycyl lysine isopeptide (Lys-Gly) (interchain with G-Cter in ubiquitin). C3408 serves as the catalytic Nucleophile; for 3CL-PRO activity. A helical transmembrane segment spans residues 3587–3607; sequence ILTSLLVLVQSTQWSLFFFLY. Residue E3608 is a topological domain, lumenal. Residues 3609–3629 traverse the membrane as a helical segment; sequence NAFLPFAMGIIAMSAFAMMFV. The Cytoplasmic portion of the chain corresponds to 3630–3634; that stretch reads KHKHA. The chain crosses the membrane as a helical span at residues 3635–3655; the sequence is FLCLFLLPSLATVAYFNMVYM. Topologically, residues 3656–3673 are lumenal; the sequence is PASWVMRIMTWLDMVDTS. A helical membrane pass occupies residues 3674-3694; the sequence is LSGFKLKDCVMYASAVVLLIL. Over 3695–3729 the chain is Cytoplasmic; it reads MTARTVYDDGARRVWTLMNVLTLVYKVYYGNALDQ. The chain crosses the membrane as a helical span at residues 3730 to 3750; the sequence is AISMWALIISVTSNYSGVVTT. At 3751-3778 the chain is on the lumenal side; it reads VMFLARGIVFMCVEYCPIFFITGNTLQC. A helical transmembrane segment spans residues 3779–3799; the sequence is IMLVYCFLGYFCTCYFGLFCL. Residues 3800 to 7096 lie on the Cytoplasmic side of the membrane; that stretch reads LNRYFRLTLG…VISSDVLVNN (3297 aa). Positions 3860-3942 constitute a RdRp Nsp7 cofactor domain; it reads SKMSDVKCTS…EMLDNRATLQ (83 aa). A disordered region spans residues 3931-4020; sequence CEEMLDNRAT…QMYKQARSED (90 aa). LRR repeat units lie at residues 3935–3959 and 3977–4004; these read LDNR…AFAT and LKKL…LEKM. Residues 3943 to 4140 enclose the RdRp Nsp8 cofactor domain; it reads AIASEFSSLP…LRANSAVKLQ (198 aa). A Nsp9 ssRNA-binding domain is found at 4141 to 4253; the sequence is NNELSPVALR…GSLAATVRLQ (113 aa). The ExoN/MTase coactivator domain maps to 4254–4392; that stretch reads AGNATEVPAN…CDQLREPMLQ (139 aa). 8 residues coordinate Zn(2+): C4327, C4330, H4336, C4343, C4370, C4373, C4381, and C4383. A NiRAN domain is found at 4399 to 4653; sequence FLNRVCGVSA…TAESHVDTDL (255 aa). The LRR 7 repeat unit spans residues 4591-4616; that stretch reads AGIVGVLTLDNQDLNGNWYDFGDFIQ. The Mn(2+) site is built by N4601 and D4610. Residues 4658–4756 enclose the Nsp12 Interface domain; the sequence is IKWDLLKYDF…HNQDVNLHSS (99 aa). The Zn(2+) site is built by H4687, C4693, C4698, C4702, and C4879. Positions 4757 to 5324 constitute a Nsp12 RNA-dependent RNA polymerase domain; sequence RLSFKELLVY…AMYTPHTVLQ (568 aa). The segment at 4759-4973 is rdRp Fingers N-ter; it reads SFKELLVYAA…HQKLLKSIAA (215 aa). Residues 4937 to 4947 are interaction with RMP Remdesivir; sequence KYAISAKNRAR. A rdRp Palm N-ter region spans residues 4974 to 5012; the sequence is TRGATVVIGTSKFYGGWHNMLKTVYSDVENPHLMGWDYP. In terms of domain architecture, RdRp catalytic spans 5004–5166; it reads PHLMGWDYPK…CFNSTYASQG (163 aa). Residues 5013–5071 form a rdRp Fingers C-ter region; the sequence is KCDRAMPNMLRIMASLVLARKHTTCCSLSHRFYRLANECAQVLSEMVMCGGSLYVKPGG. The Zn(2+) site is built by H5034, C5037, and C5038. Residues 5072–5207 form a rdRp Palm C-ter region; sequence TSSGDATTAY…TKGPHEFCSQ (136 aa). Residues S5151, D5152, and D5153 contribute to the active site. A rdRp Thumb region spans residues 5208–5324; sequence HTMLVKQGDD…AMYTPHTVLQ (117 aa). The CV ZBD domain occupies 5325 to 5437; that stretch reads AVGACVLCNS…TDFNAIATCD (113 aa). C5329, C5332, C5340, C5343, C5350, C5353, H5357, H5363, C5374, C5379, C5396, and H5399 together coordinate Zn(2+). The LRR 8 repeat unit spans residues 5552 to 5572; the sequence is TSHTVMPLSAPTLVPQEHYVR. The (+)RNA virus helicase ATP-binding domain occupies 5581 to 5762; sequence NISDEFSSNV…MKTIGPDMFL (182 aa). 5606 to 5613 lines the a ribonucleoside 5'-triphosphate pocket; it reads GPPGTGKS. Residues 5763–5932 enclose the (+)RNA virus helicase C-terminal domain; the sequence is GTCRRCPAEI…TLQAENVTGL (170 aa). The ExoN domain occupies 5997 to 6212; it reads MFITREEAIR…RCLAVHECFV (216 aa). Residues D6015, E6017, and E6116 contribute to the active site. Mg(2+) is bound by residues D6015, E6017, and E6116. Residues C6132, C6135, C6151, H6154, H6182, C6186, and H6189 each contribute to the Zn(2+) site. Active-site residues include H6193 and D6198. Mg(2+) is bound by residues H6193 and D6198. A Zn(2+)-binding site is contributed by C6204. Residues 6221 to 6452 form the N7-MTase domain; sequence YPIIGDELKI…NLWNTFTRLQ (232 aa). 6256–6262 is an S-adenosyl-L-methionine binding site; it reads DIGNPKA. Positions 6339-6353 are gpppA-binding; that stretch reads CDGGSLYVNKHAFHT. The Zn(2+) site is built by C6377, C6402, C6409, and H6412. The 61-residue stretch at 6453-6513 folds into the Nsp15 N-terminal oligomerization domain; sequence SLENVAFNVV…NVAFELWAKR (61 aa). The AV-Nsp11N/CoV-Nsp15M domain maps to 6514–6639; it reads NIKPVPEVKI…YYKKVDGVVQ (126 aa). In terms of domain architecture, NendoU spans 6656–6795; that stretch reads KPRSQMEIDF…KDGHVETFYP (140 aa). The Proton donor; for uridylate-specific endoribonuclease nsp15 activity role is filled by H6686. Residue H6701 is the Proton acceptor; for uridylate-specific endoribonuclease nsp15 activity of the active site. K6741 (for uridylate-specific endoribonuclease nsp15 activity) is an active-site residue. Uracil contacts are provided by residues 6741 to 6745 and 6792 to 6796; these read KCVCS and TFYPK. Residues 6800-7094 form the Nidovirus-type SAM-dependent 2'-O-MTase domain; that stretch reads SQAWQPGVAM…RVVISSDVLV (295 aa). The stretch at 6817 to 6841 is one LRR 9 repeat; that stretch reads RMLLEKCDLQNYGDSATLPKGIMMN. Active-site residues include K6844, D6928, K6968, and E7001.

The protein belongs to the coronaviruses polyprotein 1ab family. Interacts with host GIGYF2. In terms of assembly, may form homohexamers. Interacts with N protein. As to quaternary structure, 3CL-PRO exists as monomer and homodimer. Only the homodimer shows catalytic activity. Interacts with host FBXO22; this interaction promotes the proteasomal degradation of nsp5. Interacts with PL-PRO and nsp6. In terms of assembly, forms homodimers. Interacts with host ZFYVE1 (DFCP1), which leads to ER and DMVs binding to lipid droplets. Interacts with host TBK1; this interaction decreases IRF3 phosphorylation by 57%, which leads to reduced IFN-beta production. As to quaternary structure, interacts with nsp8 and nsp12 to form the replication-transcription complex (RTC): nsp12, nsp7, two subunits of nsp8, and up to two subunits of nsp13. Eight copies of nsp7 and eight copies of nsp8 assemble to form a heterohexadecamer dsRNA-encircling ring structure. Interacts with nsp7, nsp13 and nsp12 to form the replication-transcription complex (RTC): nsp12, nsp7, two subunits of nsp8, and up to two subunits of nsp13. Eight copies of nsp7 and eight copies of nsp8 assemble to form a heterohexadecamer dsRNA-encircling ring structure. In terms of assembly, is a dimer. Interacts with NSP12. Interacts with host SND1. As to quaternary structure, forms a dodecamer and interacts with nsp14 and nsp16; these interactions enhance nsp14 and nsp16 enzymatic activities. Interacts with nsp7 and nsp8 to form the replication-transcription complex (RTC): nsp12, nsp7, two subunits of nsp8, and up to two subunits of nsp13. Interacts with nsp9. In terms of assembly, interacts with nsp8 to form the replication-transcription complex (RTC): nsp12, nsp7, two subunits of nsp8, and up to two subunits of nsp13. Interacts with host TBK1; this interaction inhibits TBK1 phosphorylation and decreases by 75% IRF3 phosphorylation, which leads to reduced IFN-beta production. As to quaternary structure, interacts (via N-terminus) with DDX1. Interacts with nsp10. Homohexamer. In terms of assembly, interacts with nsp10. Mn(2+) serves as cofactor. Mg(2+) is required as a cofactor. Specific enzymatic cleavages in vivo by its own proteases yield mature proteins. 3CL-PRO and PL-PRO proteinases are autocatalytically processed.

The protein localises to the host cytoplasm. It is found in the host endosome. It localises to the host endoplasmic reticulum membrane. The protein resides in the host Golgi apparatus. Its subcellular location is the host nucleus. The protein localises to the host perinuclear region. It is found in the host endoplasmic reticulum. It localises to the host endoplasmic reticulum-Golgi intermediate compartment. The catalysed reaction is RNA(n) + a ribonucleoside 5'-triphosphate = RNA(n+1) + diphosphate. It carries out the reaction ATP + H2O = ADP + phosphate + H(+). The enzyme catalyses TSAVLQ-|-SGFRK-NH2 and SGVTFQ-|-GKFKK the two peptides corresponding to the two self-cleavage sites of the SARS 3C-like proteinase are the two most reactive peptide substrates. The enzyme exhibits a strong preference for substrates containing Gln at P1 position and Leu at P2 position.. It catalyses the reaction Thiol-dependent hydrolysis of ester, thioester, amide, peptide and isopeptide bonds formed by the C-terminal Gly of ubiquitin (a 76-residue protein attached to proteins as an intracellular targeting signal).. The catalysed reaction is a 5'-end (N(7)-methyl 5'-triphosphoguanosine)-ribonucleoside in mRNA + S-adenosyl-L-methionine = a 5'-end (N(7)-methyl 5'-triphosphoguanosine)-(2'-O-methyl-ribonucleoside) in mRNA + S-adenosyl-L-homocysteine + H(+). It carries out the reaction uridylyl-uridylyl-ribonucleotide-RNA = a 3'-end uridylyl-2',3'-cyclophospho-uridine-RNA + a 5'-end dephospho-ribonucleoside-RNA. The enzyme catalyses a 5'-end diphospho-ribonucleoside in mRNA + GTP + H(+) = a 5'-end (5'-triphosphoguanosine)-ribonucleoside in mRNA + diphosphate. It catalyses the reaction a 5'-end (5'-triphosphoguanosine)-ribonucleoside in mRNA + S-adenosyl-L-methionine = a 5'-end (N(7)-methyl 5'-triphosphoguanosine)-ribonucleoside in mRNA + S-adenosyl-L-homocysteine. Its activity is regulated as follows. Inhibited in vitro by GRL-0617. With respect to regulation, inhibited ex vivo by K22. It may shift NSP6 zippering activity towards the nuclear envelope, thereby impairing formation of the NSP6-compartment necessary for viral transcription/replication. Inhibited by Remdesivir antiviral drug (GS-5734). Its activity is regulated as follows. Inhibited by Remdesivir antiviral drug (GS-5734) through non-obligate RNA chain termination. With respect to regulation, inhibited by pyridone-containing alpha-ketoamides compounds 13a and 13b. In turn, alpha-ketoamide 13b (tert-butyl (1-((S)-1-(((S)-4-(benzylamino)-3,4-dioxo-1-((S)-2-oxopyrrolidin-3-yl)butan-2-yl)amino)-3-cyclopropyl-1-oxopropan-2-yl)-2-oxo-1,2-dihydropyridin-3-yl)carbamate) inhibits SARS-CoV-2 replication in human lung cells. Inhibited ex vivo by michael acceptor inhibitor N3. Inhibited ex vivo by compound 11a and 11b. Functionally, multifunctional protein involved in the transcription and replication of viral RNAs. Contains the proteinases responsible for the cleavages of the polyprotein. In terms of biological role, inhibits host translation by associating with the open head conformation of the 40S subunit. The C-terminus binds to and obstructs ribosomal mRNA entry tunnel. Thereby inhibits antiviral response triggered by innate immunity or interferons. The nsp1-40S ribosome complex further induces an endonucleolytic cleavage near the 5'UTR of host mRNAs, targeting them for degradation. This inhibits the integrated stress response (ISR) in the infected cell by preventing EIF2S1/eIF2-alpha phosphorylation upstream of stress granule formation and depletes host G3BP1. Viral mRNAs less susceptible to nsp1-mediated inhibition of translation, because of their 5'-end leader sequence. Enhances mRNA repression of the 4EHP-GYF2 complex in the host, thereby inhibiting the antiviral response and facilitating SARS-CoV-2 replication. Possibly acts in cooperation with nsp1, which induces ribosome stalling on host mRNA, triggering mRNA repression by the host 4EHP-GYF2 complex which is enhanced by nsp2. Its function is as follows. Responsible for the cleavages located at the N-terminus of the replicase polyprotein. Participates together with nsp4 in the assembly of virally-induced cytoplasmic double-membrane vesicles necessary for viral replication. Antagonizes innate immune induction of type I interferon by blocking the phosphorylation, dimerization and subsequent nuclear translocation of host IRF3. Also prevents host NF-kappa-B signaling. In addition, PL-PRO possesses a deubiquitinating/deISGylating activity and processes both 'Lys-48'- and 'Lys-63'-linked polyubiquitin chains from cellular substrates. Cleaves preferentially ISG15 from antiviral protein IFIH1 (MDA5), but not RIGI. Can play a role in host ADP-ribosylation by ADP-ribose. Plays a role in the formation and maintenance of double membrane vesicles (DMVs) replication organelles. DMVs are formed by nsp3 and nsp4, while nsp6 zippers ER membranes and connects to lipid droplets. Functionally, plays a role in the formation and maintenance of double membrane vesicles (DMVs) replication organelles. DMVs are formed by nsp3 and nsp4, while nsp6 zippers ER membranes and connects to lipid droplets. In terms of biological role, cleaves the C-terminus of replicase polyprotein at 11 sites. Recognizes substrates containing the core sequence [ILMVF]-Q-|-[SGACN]. Cleaves and inactivates human TRMT1, preventing tRNA guanine(26)-dimethylation of tRNAs. May cleave human NLRP1 in lung epithelial cells, thereby activating the NLRP1 inflammasome pathway. May cleave human GSDMD, triggering alternative GSDME-mediated epithelial cell death upon activation of the NLRP1 inflammasome, which may enhance the release interleukins 1B, 6, 16 and 18. Also able to bind an ADP-ribose-1''-phosphate (ADRP). Plays a role in the formation and maintenance of double membrane vesicles (DMVs) replication organelles. DMVs are formed by nsp3 and nsp4, while nsp6 zippers ER membranes and connects to lipid droplets. LDs are consumed during DMV formation. Binds to host TBK1 without affecting TBK1 phosphorylation; the interaction with TBK1 decreases IRF3 phosphorylation, which leads to reduced IFN-beta production. Its function is as follows. Plays a role in viral RNA synthesis. Forms a hexadecamer with nsp8 (8 subunits of each) that may participate in viral replication by acting as a primase. Alternatively, may synthesize substantially longer products than oligonucleotide primers. Functionally, plays a role in viral RNA synthesis. Forms a hexadecamer with nsp7 (8 subunits of each) that may participate in viral replication by acting as a primase. Alternatively, may synthesize substantially longer products than oligonucleotide primers. Interacts with ribosome signal recognition particle RNA (SRP). Together with NSP9, suppress protein integration into the cell membrane, thereby disrupting host immune defenses. In terms of biological role, forms a primer, NSP9-pU, which is utilized by the polymerase for the initiation of RNA chains. Interacts with ribosome signal recognition particle RNA (SRP). Together with NSP8, suppress protein integration into the cell membrane, thereby disrupting host immune defenses. Plays a pivotal role in viral transcription by stimulating both nsp14 3'-5' exoribonuclease and nsp16 2'-O-methyltransferase activities. Therefore plays an essential role in viral mRNAs cap methylation. Its function is as follows. RNA-directed RNA polymerase that catalyzes the transcription of viral genomic and subgenomic RNAs. Acts in complex with nsp7 and nsp8 to transcribe both the minus and positive strands of genomic RNA. The kinase-like NiRAN domain of NSP12 attaches one or more nucleotides to the amino terminus of NSP9, forming a covalent RNA-protein intermediate that serves as transcription/replication primer. Subgenomic RNAs (sgRNAs) are formed by discontinuous transcription: The polymerase has the ability to pause at transcription-regulating sequences (TRS) and jump to the leader TRS, resulting in a major deletion. This creates a series of subgenomic RNAs that are replicated, transcribed and translated. In addition, Nsp12 is a subunit of the viral RNA capping enzyme that catalyzes the RNA guanylyltransferase reaction for genomic and sub-genomic RNAs. Subsequently, the NiRAN domain transfers RNA to GDP, and forms the core cap structure GpppA-RNA. Functionally, plays a role in viral RNA synthesis. Multi-functional protein with a zinc-binding domain in N-terminus displaying RNA and DNA duplex-unwinding activities with 5' to 3' polarity. Activity of helicase is dependent on magnesium. Binds to host TBK1 and inhibits TBK1 phosphorylation; the interaction with TBK1 decreases IRF3 phosphorylation, which leads to reduced IFN-beta production. In terms of biological role, plays a role in viral RNA synthesis through two distinct activities. The N7-guanine methyltransferase activity plays a role in the formation of the cap structure GpppA-RNA. The proofreading exoribonuclease reduces the sensitivity of the virus to RNA mutagens during replication. This activity acts on both ssRNA and dsRNA in a 3'-5' direction. Plays a role in viral transcription/replication and prevents the simultaneous activation of host cell dsRNA sensors, such as MDA5/IFIH1, OAS, and PKR. Acts by degrading the 5'-polyuridines generated during replication of the poly(A) region of viral genomic and subgenomic RNAs. Catalyzes a two-step reaction in which a 2'3'-cyclic phosphate (2'3'-cP) is first generated by 2'-O transesterification, which is then hydrolyzed to a 3'-phosphate (3'-P). If not degraded, poly(U) RNA would hybridize with poly(A) RNA tails and activate host dsRNA sensors. May bind genomic dsRNA in association with the replication-transcription complex (RTC), and play a role in nsp12 discontinous transcription. Its function is as follows. Methyltransferase that mediates mRNA cap 2'-O-ribose methylation to the 5'-cap structure of viral mRNAs. N7-methyl guanosine cap is a prerequisite for binding of nsp16. Therefore, it plays an essential role in cap methylation of viral mRNAs, which is essential to evade the immune system, especially when restricted by human IFIT1 and IFIT3. May disrupt host mRNA splicing in nucleus by interacting with pre-mRNA Recognition Domains of the U1 and U2 snRNAs. The protein is Replicase polyprotein 1ab (rep) of Homo sapiens (Human).